Here is a 150-residue protein sequence, read N- to C-terminus: Endoribonuclease YbeY (150 aa).

Positions 113, 117, and 123 each coordinate Zn(2+).

Belongs to the endoribonuclease YbeY family. Requires Zn(2+) as cofactor.

The protein resides in the cytoplasm. In terms of biological role, single strand-specific metallo-endoribonuclease involved in late-stage 70S ribosome quality control and in maturation of the 3' terminus of the 16S rRNA. This Malacoplasma penetrans (strain HF-2) (Mycoplasma penetrans) protein is Endoribonuclease YbeY.